A 325-amino-acid chain; its full sequence is Cytochrome f (325 aa).

The N-terminal stretch at 1-40 (MSKINLSTMWSSFIKKIAKTILVAIACISLFLTSSPAANA) is a signal peptide. Heme-binding residues include tyrosine 41, cysteine 62, cysteine 65, and histidine 66. A helical transmembrane segment spans residues 291 to 311 (VKWLMAFFALVMLAQIMLVLK).

This sequence belongs to the cytochrome f family. In terms of assembly, the 4 large subunits of the cytochrome b6-f complex are cytochrome b6, subunit IV (17 kDa polypeptide, PetD), cytochrome f and the Rieske protein, while the 4 small subunits are PetG, PetL, PetM and PetN. The complex functions as a dimer. Heme serves as cofactor.

It is found in the cellular thylakoid membrane. Functionally, component of the cytochrome b6-f complex, which mediates electron transfer between photosystem II (PSII) and photosystem I (PSI), cyclic electron flow around PSI, and state transitions. The polypeptide is Cytochrome f (Trichodesmium erythraeum (strain IMS101)).